The following is a 150-amino-acid chain: Cell division protein SepF (150 aa).

Belongs to the SepF family. Homodimer. Interacts with FtsZ.

It localises to the cytoplasm. Functionally, cell division protein that is part of the divisome complex and is recruited early to the Z-ring. Probably stimulates Z-ring formation, perhaps through the cross-linking of FtsZ protofilaments. Its function overlaps with FtsA. This Clostridium botulinum (strain ATCC 19397 / Type A) protein is Cell division protein SepF.